Consider the following 190-residue polypeptide: Translation initiation factor IF-3 (190 aa).

This sequence belongs to the IF-3 family. In terms of assembly, monomer.

It is found in the cytoplasm. Functionally, IF-3 binds to the 30S ribosomal subunit and shifts the equilibrium between 70S ribosomes and their 50S and 30S subunits in favor of the free subunits, thus enhancing the availability of 30S subunits on which protein synthesis initiation begins. In Prochlorococcus marinus (strain MIT 9312), this protein is Translation initiation factor IF-3.